Consider the following 873-residue polypeptide: Calmodulin-dependent glutamylase SidJ (873 aa).

The tract at residues Gln-16 to Pro-90 is disordered. The span at Ser-22–Gly-58 shows a compositional bias: polar residues. 2 residues coordinate Mg(2+): Asp-542 and Asp-545. The disordered stretch occupies residues Asn-851–Leu-873.

In terms of assembly, interacts with host calmodulin/CALM1; this interaction is required for glutamylase activity. Requires Mg(2+) as cofactor.

The enzyme catalyses L-glutamyl-[protein] + L-glutamate + ATP = gamma-L-glutamyl-L-glutamyl-[protein] + ADP + phosphate + H(+). The catalysed reaction is (L-glutamyl)(n)-gamma-L-glutamyl-L-glutamyl-[protein] + L-glutamate + ATP = (L-glutamyl)(n+1)-gamma-L-glutamyl-L-glutamyl-[protein] + ADP + phosphate + H(+). Its activity is regulated as follows. Glytamylation catalyzed by SidJ requires host calmodulin and can be regulated by intracellular changes in Ca2+ concentrations. Also requires ATP. Its function is as follows. Glutamylase that mediates the covalent attachment of glutamate moieties to SdeA on one of the catalytic residues that is required for its mono-ADP-ribosyltransferase activity. In turn, inhibits SdeA ubiquitinating activity. Also glutamylates related SdeB, SdeC and SidE. Glutamylase activity only occurs in the host since it requires host calmodulin. May also reverse the SdeA-mediated substrate ubiquitination by cleaving the phosphodiester bond that links phosphoribosylated ubiquitin to protein substrates via its deubiquitinase activity. This is Calmodulin-dependent glutamylase SidJ from Legionella pneumophila subsp. pneumophila (strain Philadelphia 1 / ATCC 33152 / DSM 7513).